Here is a 1165-residue protein sequence, read N- to C-terminus: Vacuolar segregation protein 7 (1165 aa).

Over 1–919 (MTEEDRKLTV…RKSPFVKVKN (919 aa)) the chain is Cytoplasmic. Residues 118–147 (SVSSTNNNSNNALINHNPLSSHLSNPSSSL) are disordered. Phosphoserine is present on serine 164. Disordered regions lie at residues 215–241 (SNNTAPSTSNNIGSNTPPAPLLPLPSL), 274–423 (KAKN…SEKP), 461–497 (LIFPDSSSQQQQQQQQPPKQQQQQQNHGITSKISAPL), and 560–668 (EPPH…KRPL). Residues 216–230 (NNTAPSTSNNIGSNT) show a composition bias toward polar residues. Over residues 334 to 345 (TTSTKTAPSTAP) the composition is skewed to low complexity. Residues 346-367 (LGSTDNTQALTASVSSSNADNH) are compositionally biased toward polar residues. The span at 375-391 (SSNNNGNNSNSASNKTN) shows a compositional bias: low complexity. Residues 393–412 (DIKNSNADLSASTSNNNAIN) show a composition bias toward polar residues. Over residues 413–423 (DDSHESNSEKP) the composition is skewed to basic and acidic residues. Composition is skewed to low complexity over residues 469–485 (QQQQQQQQPPKQQQQQQ) and 562–571 (PHQLQQQQPP). Positions 576 to 587 (SVDSYTSDNPDS) are enriched in polar residues. Residues 599–613 (SLVSLSKVSPHLLSS) are compositionally biased toward low complexity. Residues 614–662 (TSSNGNTISCPNVATNSQELEPNNDISTKKSLSNSTLRHSSANRNSNYG) are compositionally biased toward polar residues. The helical; Signal-anchor for type II membrane protein transmembrane segment at 920-940 (FLYLAFVISSLLMTGFILGFL) threads the bilayer. The Vacuolar portion of the chain corresponds to 941–1165 (LATNKELQDV…KDSMVHPGKK (225 aa)). N-linked (GlcNAc...) asparagine glycosylation is found at asparagine 1020 and asparagine 1099. The interval 1074–1121 (SPGSREAKHENDDDDDDDGDDGDDENNTNERQYKSKPNARDDKEDDTK) is disordered. Residues 1085-1100 (DDDDDDDGDDGDDENN) show a composition bias toward acidic residues. Positions 1111-1121 (NARDDKEDDTK) are enriched in basic and acidic residues.

Component of the PI(3,5)P2 regulatory complex, composed of ATG18, FIG4, FAB1, VAC14 and VAC7. VAC14 nucleates the assembly of the complex and serves as a scaffold. Post-translationally, N-glycosylated.

It is found in the vacuole membrane. The PI(3,5)P2 regulatory complex regulates both the synthesis and turnover of phosphatidylinositol 3,5-bisphosphate (PtdIns(3,5)P2). Positively regulates FAB1 kinase activity. Major activator of FAB1 during hyperosmotic shock and can elevate levels of PtdIns(3,5)P2 in the absence of VAC14 and FIG4. Directly involved in vacuolar membrane scission. Required for normal vacuole acidification, inheritance and morphology. The sequence is that of Vacuolar segregation protein 7 (VAC7) from Saccharomyces cerevisiae (strain ATCC 204508 / S288c) (Baker's yeast).